A 638-amino-acid chain; its full sequence is Threonine--tRNA ligase (638 aa).

The TGS domain occupies 1–61; it reads MPIITLPDGS…NSDSKVVIIT (61 aa). The interval 242 to 533 is catalytic; that stretch reads DHRKLGKKHS…LIEQYEAKFP (292 aa). The Zn(2+) site is built by C333, H384, and H510.

Belongs to the class-II aminoacyl-tRNA synthetase family. Homodimer. Zn(2+) serves as cofactor.

It localises to the cytoplasm. The catalysed reaction is tRNA(Thr) + L-threonine + ATP = L-threonyl-tRNA(Thr) + AMP + diphosphate + H(+). In terms of biological role, catalyzes the attachment of threonine to tRNA(Thr) in a two-step reaction: L-threonine is first activated by ATP to form Thr-AMP and then transferred to the acceptor end of tRNA(Thr). Also edits incorrectly charged L-seryl-tRNA(Thr). In Prochlorococcus marinus (strain MIT 9215), this protein is Threonine--tRNA ligase.